The following is a 609-amino-acid chain: Proteasome-associated ATPase (609 aa).

The interval 1-24 is disordered; it reads MADSERSEAFGTPDDTPLSSNDAA. A coiled-coil region spans residues 19–96; it reads SSNDAAELEQ…LREEVDRLGQ (78 aa). An ATP-binding site is contributed by 296 to 301; the sequence is GCGKTL. The segment at 608 to 609 is docks into pockets in the proteasome alpha-ring; it reads YL.

The protein belongs to the AAA ATPase family. As to quaternary structure, homohexamer. Assembles into a hexameric ring structure that caps the 20S proteasome core. Strongly interacts with the prokaryotic ubiquitin-like protein Pup through a hydrophobic interface; the interacting region of ARC lies in its N-terminal coiled-coil domain. There is one Pup binding site per ARC hexamer ring. Upon ATP-binding, the C-terminus of ARC interacts with the alpha-rings of the proteasome core, possibly by binding to the intersubunit pockets.

Its pathway is protein degradation; proteasomal Pup-dependent pathway. Its function is as follows. ATPase which is responsible for recognizing, binding, unfolding and translocation of pupylated proteins into the bacterial 20S proteasome core particle. May be essential for opening the gate of the 20S proteasome via an interaction with its C-terminus, thereby allowing substrate entry and access to the site of proteolysis. Thus, the C-termini of the proteasomal ATPase may function like a 'key in a lock' to induce gate opening and therefore regulate proteolysis. In Mycobacterium ulcerans (strain Agy99), this protein is Proteasome-associated ATPase.